We begin with the raw amino-acid sequence, 73 residues long: Large ribosomal subunit protein bL31 (73 aa).

Positions 16, 18, 36, and 39 each coordinate Zn(2+).

It belongs to the bacterial ribosomal protein bL31 family. Type A subfamily. As to quaternary structure, part of the 50S ribosomal subunit. Zn(2+) serves as cofactor.

Functionally, binds the 23S rRNA. The protein is Large ribosomal subunit protein bL31 of Desulfotalea psychrophila (strain LSv54 / DSM 12343).